The sequence spans 135 residues: Germinal center-associated signaling and motility-like protein (135 aa).

The interval 1–68 (MGNYLLRKLS…ENGSGSEEVC (68 aa)) is disordered. The segment covering 22 to 48 (GNPDEERKRQEMTTFERKLQDQDKKSQ) has biased composition (basic and acidic residues). Positions 26–50 (EERKRQEMTTFERKLQDQDKKSQEV) form a coiled coil. Residues 51-66 (SSTSNQENENGSGSEE) are compositionally biased toward low complexity.

The polypeptide is Germinal center-associated signaling and motility-like protein (GCSAML) (Homo sapiens (Human)).